The sequence spans 325 residues: MATH domain and coiled-coil domain-containing protein At3g58430 (325 aa).

One can recognise an MATH domain in the interval 6–131; it reads HKKFCWIIKN…KGDFKIIAEV (126 aa). Residues 258–306 are a coiled coil; sequence FKVDWLEKKLDQVKDKKEREQSGLARLHELEEYLLKLKQKCSNLDLLVE.

This Arabidopsis thaliana (Mouse-ear cress) protein is MATH domain and coiled-coil domain-containing protein At3g58430.